A 462-amino-acid polypeptide reads, in one-letter code: Myrosinase-binding protein 1 (462 aa).

The disordered stretch occupies residues M1 to G23. Jacalin-type lectin domains lie at P6–P148, P157–P300, and T310–P453. Residues G13 to G23 are compositionally biased toward basic and acidic residues.

Belongs to the jacalin lectin family. Expressed exclusively in flowers, in male and female organs, petals and pedicels. Not detected in pollen grains or sepals.

The polypeptide is Myrosinase-binding protein 1 (MBP1) (Arabidopsis thaliana (Mouse-ear cress)).